Here is a 218-residue protein sequence, read N- to C-terminus: Glutathione S-transferase class-mu 26 kDa isozyme 51 (218 aa).

The GST N-terminal domain occupies 2-83 (PAKLGYWKIR…YIADKHGMLG (82 aa)). Residues 7 to 8 (YW), 41 to 45 (WFGDK), 54 to 55 (NL), and 67 to 68 (QS) contribute to the glutathione site. In terms of domain architecture, GST C-terminal spans 85-203 (TPEERARISM…ESEKFIKWPL (119 aa)). Residue tyrosine 111 coordinates substrate.

This sequence belongs to the GST superfamily. Mu family. In terms of assembly, homodimer.

Its subcellular location is the cytoplasm. It catalyses the reaction RX + glutathione = an S-substituted glutathione + a halide anion + H(+). Its function is as follows. Conjugation of reduced glutathione to a wide number of exogenous and endogenous hydrophobic electrophiles. Functionally, GST isoenzymes appear to play a central role in the parasite detoxification system. Other functions are also suspected including a role in increasing the solubility of haematin in the parasite gut. The polypeptide is Glutathione S-transferase class-mu 26 kDa isozyme 51 (Fasciola hepatica (Liver fluke)).